The sequence spans 217 residues: 3,4-dihydroxy-2-butanone 4-phosphate synthase (217 aa).

D-ribulose 5-phosphate-binding positions include 37–38, D42, 150–154, and E174; these read RE and RRGHT. A Mg(2+)-binding site is contributed by E38. Position 153 (H153) interacts with Mg(2+).

The protein belongs to the DHBP synthase family. Homodimer. Mg(2+) is required as a cofactor. It depends on Mn(2+) as a cofactor.

The enzyme catalyses D-ribulose 5-phosphate = (2S)-2-hydroxy-3-oxobutyl phosphate + formate + H(+). The protein operates within cofactor biosynthesis; riboflavin biosynthesis; 2-hydroxy-3-oxobutyl phosphate from D-ribulose 5-phosphate: step 1/1. In terms of biological role, catalyzes the conversion of D-ribulose 5-phosphate to formate and 3,4-dihydroxy-2-butanone 4-phosphate. The protein is 3,4-dihydroxy-2-butanone 4-phosphate synthase of Shewanella baltica (strain OS155 / ATCC BAA-1091).